Reading from the N-terminus, the 346-residue chain is Phosphoribosylformylglycinamidine cyclo-ligase (346 aa).

The protein belongs to the AIR synthase family.

The protein localises to the cytoplasm. The enzyme catalyses 2-formamido-N(1)-(5-O-phospho-beta-D-ribosyl)acetamidine + ATP = 5-amino-1-(5-phospho-beta-D-ribosyl)imidazole + ADP + phosphate + H(+). The protein operates within purine metabolism; IMP biosynthesis via de novo pathway; 5-amino-1-(5-phospho-D-ribosyl)imidazole from N(2)-formyl-N(1)-(5-phospho-D-ribosyl)glycinamide: step 2/2. This is Phosphoribosylformylglycinamidine cyclo-ligase from Shewanella piezotolerans (strain WP3 / JCM 13877).